The sequence spans 223 residues: MRAPPLLLLLAACAPPSGAAVDPTPPGWEPAPDAPWCPYKVLSEGPETGGGRLCFRSPVRGFRCQTPGCETLASAGGSLRAHVLRNRSVLLQWRLAPAEARRVRVFALNCSWRGTYTRFPCDRVLLGASCRDYLLPDVHDSVRYRLCLQQLPLRAEVAVVPPELAECVEFTAEPAAMQEIVVAMTAVGGSICVMLVVICLLVAYITENLMHPTFRRPSLRRQP.

Positions 1-19 (MRAPPLLLLLAACAPPSGA) are cleaved as a signal peptide. Residues 20 to 179 (AVDPTPPGWE…FTAEPAAMQE (160 aa)) lie on the Extracellular side of the membrane. In terms of domain architecture, Fibronectin type-III spans 72–168 (LASAGGSLRA…VVPPELAECV (97 aa)). N-linked (GlcNAc...) asparagine glycosylation is found at Asn86 and Asn109. Residues 180-200 (IVVAMTAVGGSICVMLVVICL) form a helical membrane-spanning segment. Over 201–223 (LVAYITENLMHPTFRRPSLRRQP) the chain is Cytoplasmic.

The protein resides in the membrane. The protein is Fibronectin type III domain-containing protein 10 (Fndc10) of Mus musculus (Mouse).